The following is a 342-amino-acid chain: Polygalacturonase inhibitor 3 (342 aa).

A signal peptide spans 1-29 (MTQFNIPVTMSSSLSIILVILVSLRTALS). Intrachain disulfides connect cysteine 32-cysteine 62 and cysteine 63-cysteine 72. N-linked (GlcNAc...) asparagine glycosylation occurs at asparagine 64. 10 LRR repeats span residues 82–107 (NNLD…LPYL), 108–132 (NFLY…LTQL), 133–156 (HYLY…IKTL), 157–180 (VTLD…LPNL), 181–205 (VGIT…SKLF), 206–228 (TSMT…NLNL), 229–252 (AFVD…DKNT), 253–275 (QKIH…SKNL), 276–299 (NGLD…LKFL), and 300–319 (HSLN…GGNL). Residue asparagine 141 is glycosylated (N-linked (GlcNAc...) asparagine). Residue asparagine 303 is glycosylated (N-linked (GlcNAc...) asparagine). 2 disulfides stabilise this stretch: cysteine 310–cysteine 332 and cysteine 334–cysteine 341.

Belongs to the polygalacturonase-inhibiting protein family. Found in suspension-cultured cells and to a lesser extent in hypocotyls, leaves and flowers.

Its subcellular location is the secreted. The protein resides in the cell wall. The protein localises to the membrane. Inhibitor of fungal polygalacturonase. It is an important factor for plant resistance to phytopathogenic fungi. This chain is Polygalacturonase inhibitor 3 (PGIP3), found in Phaseolus vulgaris (Kidney bean).